A 451-amino-acid chain; its full sequence is Interferon-related developmental regulator 1 (451 aa).

A compositionally biased stretch (basic residues) spans 1–10 (MPKNKKRNTP). The interval 1–69 (MPKNKKRNTP…PSSFAEDGPE (69 aa)) is disordered. Over residues 23-33 (AAAATAATAGG) the composition is skewed to low complexity. Over residues 49 to 61 (ETMSHCSGYSDPS) the composition is skewed to polar residues.

This sequence belongs to the IFRD family. As to quaternary structure, interacts with PSIP1/LEDGF. As to expression, expressed in a variety of tissues.

Functionally, could play a role in regulating gene activity in the proliferative and/or differentiative pathways induced by NGF. May be an autocrine factor that attenuates or amplifies the initial ligand-induced signal. The protein is Interferon-related developmental regulator 1 (IFRD1) of Homo sapiens (Human).